Reading from the N-terminus, the 260-residue chain is Na(+)-translocating NADH-quinone reductase subunit C (260 aa).

Residues 12–32 (LLVIILLSLACSIIVAGSAVL) traverse the membrane as a helical segment. FMN phosphoryl threonine is present on T226.

The protein belongs to the NqrC family. As to quaternary structure, composed of six subunits; NqrA, NqrB, NqrC, NqrD, NqrE and NqrF. The cofactor is FMN.

Its subcellular location is the cell inner membrane. The catalysed reaction is a ubiquinone + n Na(+)(in) + NADH + H(+) = a ubiquinol + n Na(+)(out) + NAD(+). Functionally, NQR complex catalyzes the reduction of ubiquinone-1 to ubiquinol by two successive reactions, coupled with the transport of Na(+) ions from the cytoplasm to the periplasm. NqrA to NqrE are probably involved in the second step, the conversion of ubisemiquinone to ubiquinol. The protein is Na(+)-translocating NADH-quinone reductase subunit C of Pasteurella multocida (strain Pm70).